The primary structure comprises 134 residues: MGQKEQTLAYGTGRRKTSVAKVRLIPGKGEILINSKPANLYLQYNLSYLAAVKSPLESLGLANEYNVIVNTQGGGLTGQSEAIRLGLARALCQISLTHRPLLKSDHHLTRDARAKERKKYGLHKARKAPQYSKR.

Residues 105-114 (DHHLTRDARA) are compositionally biased toward basic and acidic residues. Residues 105–134 (DHHLTRDARAKERKKYGLHKARKAPQYSKR) form a disordered region. Residues 115 to 134 (KERKKYGLHKARKAPQYSKR) show a composition bias toward basic residues.

Belongs to the universal ribosomal protein uS9 family.

It localises to the plastid. Its subcellular location is the cyanelle. This is Small ribosomal subunit protein uS9c (rps9) from Cyanophora paradoxa.